The following is a 96-amino-acid chain: UPF0235 protein VIBHAR_03581 (96 aa).

It belongs to the UPF0235 family.

This is UPF0235 protein VIBHAR_03581 from Vibrio campbellii (strain ATCC BAA-1116).